The sequence spans 321 residues: NADPH-dependent codeinone reductase 1-3 (321 aa).

Residues threonine 27 and aspartate 51 each coordinate NADPH. Residues tyrosine 56 and histidine 119 each act as proton donor in the active site. Histidine 119 is a substrate binding site. Residues glutamine 187, serine 214, leucine 216, serine 264, and arginine 269 each contribute to the NADPH site. Residues 300–321 (ADFLLSPTGPFKTEEEFWDEKD) form a disordered region.

Belongs to the aldo/keto reductase family. Latex secreting cells (laticifer cells). Expressed constitutively in all organs with highest levels in capsules. Restricted to the parietal region of sieve elements adjacent or proximal to laticifers in roots, stems, leaves and carpels.

The protein localises to the cytoplasm. Its subcellular location is the cytosol. The enzyme catalyses codeine + NADP(+) = codeinone + NADPH + H(+). The catalysed reaction is neopine + NADP(+) = neopinone + NADPH + H(+). It carries out the reaction morphine + NADP(+) = morphinone + NADPH + H(+). It catalyses the reaction neomorphine + NADP(+) = neomorphinone + NADPH + H(+). The protein operates within alkaloid biosynthesis; morphine biosynthesis. Functionally, NADPH-dependent codeinone reductase involved in biosynthesis of morphinan-type benzylisoquinoline and opiate alkaloids natural products. Reduces codeinone to codeine in the penultimate step in morphine biosynthesis. Can use morphinone, hydrocodone and hydromorphone as substrate during reductive reaction with NADPH as cofactor, and morphine and dihydrocodeine as substrate during oxidative reaction with NADP as cofactor. Converts morphinone to morphine, and neomorphinone to neomorphine. Reduces irreversibly neopinone, a spontaneous isomer of codeinone, to neopine; in planta, neopine levels are limited to low levels. In Papaver somniferum (Opium poppy), this protein is NADPH-dependent codeinone reductase 1-3.